The following is a 359-amino-acid chain: Molybdenum import ATP-binding protein ModC (359 aa).

The ABC transporter domain occupies 1-229; it reads MLELNFSQQL…SALRPWLQRE (229 aa). 31–38 lines the ATP pocket; it reads GLSGAGKT. Residues 289 to 354 enclose the Mop domain; that stretch reads SSSIRNILPV…IKSVSFNRQN (66 aa).

It belongs to the ABC transporter superfamily. Molybdate importer (TC 3.A.1.8) family. As to quaternary structure, the complex is composed of two ATP-binding proteins (ModC), two transmembrane proteins (ModB) and a solute-binding protein (ModA).

The protein resides in the cell inner membrane. It catalyses the reaction molybdate(out) + ATP + H2O = molybdate(in) + ADP + phosphate + H(+). Part of the ABC transporter complex ModABC involved in molybdenum import. Responsible for energy coupling to the transport system. This Yersinia pseudotuberculosis serotype I (strain IP32953) protein is Molybdenum import ATP-binding protein ModC.